A 488-amino-acid chain; its full sequence is Proline--tRNA ligase (488 aa).

Belongs to the class-II aminoacyl-tRNA synthetase family. ProS type 3 subfamily. As to quaternary structure, homodimer.

It localises to the cytoplasm. It catalyses the reaction tRNA(Pro) + L-proline + ATP = L-prolyl-tRNA(Pro) + AMP + diphosphate. In terms of biological role, catalyzes the attachment of proline to tRNA(Pro) in a two-step reaction: proline is first activated by ATP to form Pro-AMP and then transferred to the acceptor end of tRNA(Pro). The polypeptide is Proline--tRNA ligase (Pyrobaculum arsenaticum (strain DSM 13514 / JCM 11321 / PZ6)).